The sequence spans 196 residues: Flagellin B2 (196 aa).

A propeptide spanning residues 1-12 (MFEFITDEDERG) is cleaved from the precursor.

It belongs to the archaeal flagellin family. In terms of processing, glycosylated.

The protein resides in the archaeal flagellum. In terms of biological role, flagellin is the subunit protein which polymerizes to form the filaments of archaeal flagella. In Halobacterium salinarum (strain ATCC 700922 / JCM 11081 / NRC-1) (Halobacterium halobium), this protein is Flagellin B2 (flaB2).